A 1390-amino-acid chain; its full sequence is Contactin (1390 aa).

A signal peptide spans 1 to 18; the sequence is MLAKIGLLASILVLNLVG. The interval 25-67 is disordered; the sequence is SENLPDPDPQSGQQPQNYQPSYNKDYSPRYNPLYTGQQSADPN. Over residues 58 to 67 the composition is skewed to polar residues; the sequence is YTGQQSADPN. Ig-like C2-type domains lie at 362–463, 468–561, 576–656, 661–745, 756–843, and 848–939; these read PYFV…AHLN, MEFN…LRVT, PKVF…IYIN, PQFT…TSFS, PSFK…ARVI, and IRFI…TSVS. An N-linked (GlcNAc...) asparagine glycan is attached at Asn369. 4 cysteine pairs are disulfide-bonded: Cys388–Cys446, Cys489–Cys540, Cys593–Cys640, and Cys682–Cys734. N-linked (GlcNAc...) asparagine glycans are attached at residues Asn537, Asn604, Asn629, Asn691, and Asn774. 2 disulfides stabilise this stretch: Cys779-Cys827 and Cys870-Cys923. N-linked (GlcNAc...) asparagine glycosylation is found at Asn912, Asn986, and Asn991. 4 Fibronectin type-III domains span residues 946–1048, 1053–1151, 1156–1254, and 1259–1357; these read APGG…TYED, APRN…SAED, APQK…TYRK, and PPSS…MGKT. Residues Asn1166, Asn1171, and Asn1307 are each glycosylated (N-linked (GlcNAc...) asparagine). Ala1362 is lipidated: GPI-anchor amidated alanine. The propeptide at 1363-1390 is removed in mature form; the sequence is NTRHGHNINTALILSTLLLISTFLYTSQ.

It belongs to the immunoglobulin superfamily. Contactin family. In terms of assembly, forms a complex with Nrg and Nrx. Forms a complex composed of septa junction proteins Nrx-IV/Nrx, Tsf2/MTf, Cont and Nrg during late embryogenesis. Post-translationally, N-glycosylated. In terms of tissue distribution, expressed in ectodermally derived epithelial cells from stage 12. All these tissues, such as epidermis, hindgut, foregut, salivary glands and trachea, which contain pleated septate junctions. Expressed by ectodermally derived epithelial cells and along peripheral nerves. Not present in midline glial cells. Expressed in epithelial cells and glial cells of peripheral nerves.

Its subcellular location is the cell membrane. It is found in the cell junction. The protein resides in the septate junction. In terms of biological role, required for organization of septate junctions and paracellular barrier functions. Septate junctions, which are the equivalent of vertebrates tight junctions, are characterized by regular arrays of transverse structures that span the intermembrane space and form a physical barrier to diffusion. The chain is Contactin (Cont) from Drosophila melanogaster (Fruit fly).